Reading from the N-terminus, the 312-residue chain is Retinol dehydrogenase 8 (312 aa).

9-18 (LISGCSSGIG) contacts NADP(+). The next 3 helical transmembrane spans lie at 87 to 107 (VLVN…SLAA), 138 to 158 (IVVV…VYAA), and 170 to 190 (LAVQ…GPVV). Residue Ser-143 participates in substrate binding. The active-site Proton acceptor is Tyr-156.

Belongs to the short-chain dehydrogenases/reductases (SDR) family. Detected in photoreceptor outer segments in the retina (at protein level).

Its subcellular location is the membrane. It carries out the reaction all-trans-retinol + NADP(+) = all-trans-retinal + NADPH + H(+). In terms of biological role, retinol dehydrogenase with a clear preference for NADP. Converts all-trans-retinal to all-trans-retinol. May play a role in the regeneration of visual pigment at high light intensity. The protein is Retinol dehydrogenase 8 (RDH8) of Bos taurus (Bovine).